We begin with the raw amino-acid sequence, 491 residues long: UDP-N-acetylmuramate--L-alanine ligase (491 aa).

126-132 (GTHGKTT) serves as a coordination point for ATP.

It belongs to the MurCDEF family.

It localises to the cytoplasm. It carries out the reaction UDP-N-acetyl-alpha-D-muramate + L-alanine + ATP = UDP-N-acetyl-alpha-D-muramoyl-L-alanine + ADP + phosphate + H(+). It participates in cell wall biogenesis; peptidoglycan biosynthesis. Functionally, cell wall formation. The protein is UDP-N-acetylmuramate--L-alanine ligase of Klebsiella pneumoniae (strain 342).